The sequence spans 154 residues: Deoxyuridine 5'-triphosphate nucleotidohydrolase (154 aa).

Residues 64–66, Asn-77, 81–83, and Lys-91 each bind substrate; these read RSG and TVD. Residues 135–154 form a disordered region; it reads LADTTRGDGGHGSSGGHASL. Residues 144–154 show a composition bias toward gly residues; that stretch reads GHGSSGGHASL.

Belongs to the dUTPase family. As to quaternary structure, homotrimer. Mg(2+) is required as a cofactor.

It catalyses the reaction dUTP + H2O = dUMP + diphosphate + H(+). It participates in pyrimidine metabolism; dUMP biosynthesis; dUMP from dCTP (dUTP route): step 2/2. In terms of biological role, this enzyme is involved in nucleotide metabolism: it produces dUMP, the immediate precursor of thymidine nucleotides and it decreases the intracellular concentration of dUTP so that uracil cannot be incorporated into DNA. In Mycolicibacterium vanbaalenii (strain DSM 7251 / JCM 13017 / BCRC 16820 / KCTC 9966 / NRRL B-24157 / PYR-1) (Mycobacterium vanbaalenii), this protein is Deoxyuridine 5'-triphosphate nucleotidohydrolase.